The primary structure comprises 507 residues: Cytochrome c-type protein ImcH (507 aa).

3 helical membrane passes run 14–34, 45–65, and 100–120; these read ISLIGFLLAVVATGLIIAFIA, YIGLLVYFAFPGMLILGLILV, and LFIFFVLASVIFVLIVSVASI. Residues cysteine 132, cysteine 136, methionine 140, histidine 152, cysteine 157, cysteine 160, histidine 161, aspartate 400, cysteine 449, cysteine 452, histidine 453, cysteine 487, cysteine 490, histidine 491, and glutamate 496 each contribute to the heme site.

Belongs to the NapC/NirT/NrfH family. Post-translationally, binds 4 heme c groups covalently per subunit.

The protein localises to the cell inner membrane. In terms of biological role, redox protein involved in a high-potential metal respiratory pathway. Is required only for electron transfer to terminal extracellular electron acceptors with redox potentials higher than -0.1 V. ImcH likely transfers electrons from the quinone pool to a periplasmic acceptor. In Geobacter sulfurreducens (strain ATCC 51573 / DSM 12127 / PCA), this protein is Cytochrome c-type protein ImcH.